Here is a 289-residue protein sequence, read N- to C-terminus: Release factor glutamine methyltransferase (289 aa).

Residues 130–134 (GTGTG), aspartate 153, tryptophan 182, and asparagine 196 each bind S-adenosyl-L-methionine. 196-199 (NPPY) serves as a coordination point for substrate.

Belongs to the protein N5-glutamine methyltransferase family. PrmC subfamily.

The catalysed reaction is L-glutaminyl-[peptide chain release factor] + S-adenosyl-L-methionine = N(5)-methyl-L-glutaminyl-[peptide chain release factor] + S-adenosyl-L-homocysteine + H(+). Its function is as follows. Methylates the class 1 translation termination release factors RF1/PrfA and RF2/PrfB on the glutamine residue of the universally conserved GGQ motif. In Agrobacterium fabrum (strain C58 / ATCC 33970) (Agrobacterium tumefaciens (strain C58)), this protein is Release factor glutamine methyltransferase.